We begin with the raw amino-acid sequence, 362 residues long: MKKNIEPCYYGDYLQLDKILGAQDLQSEKYGDGAHEEMLFIIVHQVYELWFKQVLHELNAVIDTFNQEAVKDQQLTQVVHRLQRIIQIQKLMNDQIAIMETMTPQQFLSFRDYLVPASGFQSIQFKRLEISLGLKREFRIDFDKQSFYNRLTDKDRALLENLENKPSLFELVDKWLSRMPLLKTEDFDFWQYYKDAADEMLKDDHHTVSTSDMLSDTEKRQEIKDLQATMENFDALFNETQFEKLRGEGKFRLSHNALLSALFIKQYSEEPIFNLPFQLITALTEIDEQLTIWRYRHAMMVQRMLGTKIGTGGSSGHHYLKKTTESNRIYLDFFNMATFLLPKSALPDLPESVRRRLGFYLQ.

Residues 40-44 (FIIVH) and Arg111 contribute to the substrate site. His297 contacts heme. Residue Thr311 participates in substrate binding.

This sequence belongs to the tryptophan 2,3-dioxygenase family. Homotetramer. Requires heme as cofactor.

It catalyses the reaction L-tryptophan + O2 = N-formyl-L-kynurenine. Its pathway is amino-acid degradation; L-tryptophan degradation via kynurenine pathway; L-kynurenine from L-tryptophan: step 1/2. In terms of biological role, heme-dependent dioxygenase that catalyzes the oxidative cleavage of the L-tryptophan (L-Trp) pyrrole ring and converts L-tryptophan to N-formyl-L-kynurenine. Catalyzes the oxidative cleavage of the indole moiety. This Alteromonas mediterranea (strain DSM 17117 / CIP 110805 / LMG 28347 / Deep ecotype) protein is Tryptophan 2,3-dioxygenase.